Reading from the N-terminus, the 517-residue chain is MALSLRACILLLKEHHLLKSAAIQNTEDVDMTGIAYDSRKVSGPTLFFCKGDKFRPIYLSMAKDNGARTYVAEKPYVEGNGLNALIVRNITKAMAILSAAFFDYPQDDLFVIAYTGTKGKTTASYFTEAILNEARPRHIALFSTIDTVVGPEPDQRFKSNLTTPESLDLFRDMREAVENGMTHLVMEVSSQAYLRNRVFGLTYDVGFFLNITPDHIGPNEHPTFANYLHNKLQLLVNARKVVINAETEHFDQVYAAATTTTYPESIYLFASAGFRPKRDDIDIDFRFDSQEADVAESRFTLVPVTEKAAALNIGGHYSLALIGDFNESNATAAIIGAGLAGVDASAAVPGIAKVKIPGRMEHTKVAGHGAVYVDYAHNYASMKALLSFLKHAYKDPRLLVVVGSPGDKGVSRRPGFAKVLTEFATEAFLTTDDPGYEDPANIIEEIDSKIDHSKVKVHKVLDRKKAIAEAISDSGPNDIVVVAGKGADPYQKVRGVNTPWPTDMAVVKQVAKSLQEG.

S38 contacts UDP-N-acetyl-alpha-D-muramoyl-L-alanyl-D-glutamate. 116 to 122 (GTKGKTT) lines the ATP pocket. UDP-N-acetyl-alpha-D-muramoyl-L-alanyl-D-glutamate-binding positions include N160, 162–163 (TT), S189, and R197. At K231 the chain carries N6-carboxylysine.

This sequence belongs to the MurCDEF family. MurE subfamily. In terms of processing, carboxylation is probably crucial for Mg(2+) binding and, consequently, for the gamma-phosphate positioning of ATP.

It localises to the cytoplasm. The protein operates within cell wall biogenesis; peptidoglycan biosynthesis. In terms of biological role, catalyzes the addition of an amino acid to the nucleotide precursor UDP-N-acetylmuramoyl-L-alanyl-D-glutamate (UMAG) in the biosynthesis of bacterial cell-wall peptidoglycan. This Lacticaseibacillus paracasei (strain ATCC 334 / BCRC 17002 / CCUG 31169 / CIP 107868 / KCTC 3260 / NRRL B-441) (Lactobacillus paracasei) protein is UDP-N-acetylmuramyl-tripeptide synthetase.